Here is a 489-residue protein sequence, read N- to C-terminus: Rhamnulokinase (489 aa).

13-17 is an ATP binding site; that stretch reads ASSGR. A disulfide bond links C68 and C222. Substrate is bound by residues G83 and 236–238; that span reads HDT. D237 acts as the Proton acceptor in catalysis. T259 lines the ATP pocket. Position 296 (N296) interacts with substrate. Q304 contacts ATP. Cysteines 353 and 370 form a disulfide. ATP is bound at residue G402. C413 and C417 are joined by a disulfide.

The protein belongs to the rhamnulokinase family. As to quaternary structure, monomer. Requires Mg(2+) as cofactor.

It carries out the reaction L-rhamnulose + ATP = L-rhamnulose 1-phosphate + ADP + H(+). It functions in the pathway carbohydrate degradation; L-rhamnose degradation; glycerone phosphate from L-rhamnose: step 2/3. Functionally, involved in the catabolism of L-rhamnose (6-deoxy-L-mannose). Catalyzes the transfer of the gamma-phosphate group from ATP to the 1-hydroxyl group of L-rhamnulose to yield L-rhamnulose 1-phosphate. This Escherichia coli O157:H7 protein is Rhamnulokinase.